Here is a 132-residue protein sequence, read N- to C-terminus: Small ribosomal subunit protein uS9 (132 aa).

Positions 100-132 are disordered; the sequence is LKSNGLLTRDDRTKERKKPGLKRARKAPQYTKR. The span at 114 to 132 shows a compositional bias: basic residues; sequence ERKKPGLKRARKAPQYTKR.

Belongs to the universal ribosomal protein uS9 family.

This Dehalococcoides mccartyi (strain ATCC BAA-2266 / KCTC 15142 / 195) (Dehalococcoides ethenogenes (strain 195)) protein is Small ribosomal subunit protein uS9.